The sequence spans 306 residues: Mitochondrial substrate carrier family protein ucpA (306 aa).

Over 1 to 15 (MSVNLNNNKNNKNKV) the chain is Mitochondrial intermembrane. 3 Solcar repeats span residues 13–103 (NKVA…ISNA), 112–204 (YFFL…CKNL), and 211–301 (DGIY…FKKL). Residues 16-36 (AIGFISGSLASICATTVTNPI) form a helical membrane-spanning segment. Residues 37–83 (ELVKTRLQLQGELQLSQRIYNGVWDAFKQIYKTEGIRGLQSGLIPAY) lie on the Mitochondrial matrix side of the membrane. The helical transmembrane segment at 84–103 (FSQATMQGIRLGSFDLISNA) threads the bilayer. Residues 104–117 (LGAKPNQDYFFLKN) lie on the Mitochondrial intermembrane side of the membrane. The helical transmembrane segment at 118–138 (LLAGATAGAIGAAAGSPFDLV) threads the bilayer. The Mitochondrial matrix portion of the chain corresponds to 139 to 174 (KVRMQAANMYKNDPQFVGYSSSFAAFKQIIQKEGFK). The helical transmembrane segment at 175–195 (GLTRGMLTSAQRTAVGSAIQL) threads the bilayer. Residues 196–211 (STYGSCKNLVLNFVDD) are Mitochondrial intermembrane-facing. Residues 212–232 (GIYAYIISSMVAGFIVTFGMN) form a helical membrane-spanning segment. The Mitochondrial matrix segment spans residues 233–276 (PFDVARTRLYFQGKGNSHGEIYKGLMDCVYKTVKKEGFGAVYKG). The chain crosses the membrane as a helical span at residues 277 to 295 (FWAHYLRLGPHTILTLVFW). The Mitochondrial intermembrane segment spans residues 296–306 (EQFKKLFSGEL).

This sequence belongs to the mitochondrial carrier (TC 2.A.29) family.

The protein localises to the mitochondrion inner membrane. Functionally, mitochondrial solute carriers shuttle metabolites, nucleotides, and cofactors through the mitochondrial inner membrane. Transports oxaloacetate and sulfate. The sequence is that of Mitochondrial substrate carrier family protein ucpA (ucpA) from Dictyostelium discoideum (Social amoeba).